Reading from the N-terminus, the 2408-residue chain is Protein ELYS (2408 aa).

The seven-bladed beta propeller repeats stretch occupies residues 1-492 (MQNLEAQVTG…SGLIHFACTG (492 aa)). Residues 1016-2408 (YSLPSLVWRE…AKPVTRRKMR (1393 aa)) are disordered. Positions 1124 to 1145 (PLTSSDTDNNQTPHKSPLLKTS) are enriched in polar residues. Residues 1457-1466 (NDQDSEEIEE) are compositionally biased toward acidic residues. Polar residues-rich tracts occupy residues 1705-1719 (INEGQVSPNRDQSTL) and 1735-1750 (PADSSTDIIGNITLPT). The span at 2136 to 2149 (QASKIQEDLSDTPR) shows a compositional bias: basic and acidic residues. Sufficient for chromatin-binding regions lie at residues 2281-2359 (STQY…PVEI) and 2359-2408 (IKLI…RKMR). The tract at residues 2281 to 2408 (STQYVFSPPS…AKPVTRRKMR (128 aa)) is sufficient to block nuclear pore assembly. Residues 2329–2341 (SKPRGRPPKHKAK) constitute a DNA-binding region (a.T hook). A compositionally biased stretch (basic residues) spans 2331–2348 (PRGRPPKHKAKAVTRVLK). A compositionally biased stretch (basic and acidic residues) spans 2378 to 2389 (DSTEAKGAEKIS).

The protein belongs to the ELYS family. In terms of assembly, interacts with the Nup107-160 subcomplex of the NPC.

Its subcellular location is the nucleus. It localises to the nuclear pore complex. The protein resides in the cytoplasm. It is found in the nucleoplasm. Required for the assembly of a functional nuclear pore complex (NPC) on the surface of chromosomes as nuclei form at the end of mitosis. May initiate NPC assembly by binding to chromatin and recruiting the Nup107-160 subcomplex, which may in turn recruit membrane vesicles containing pom121 and tmem48/ndc1. Association with chromatin may require the presence of the mcm2-mcm7 complex, suggesting a mechanism for coordination of nuclear assembly and the inactivation of replication licensing. This Xenopus laevis (African clawed frog) protein is Protein ELYS (ahctf1).